The sequence spans 292 residues: Elongation factor Ts (292 aa).

The tract at residues 80–83 (TDFV) is involved in Mg(2+) ion dislocation from EF-Tu.

The protein belongs to the EF-Ts family.

Its subcellular location is the cytoplasm. Its function is as follows. Associates with the EF-Tu.GDP complex and induces the exchange of GDP to GTP. It remains bound to the aminoacyl-tRNA.EF-Tu.GTP complex up to the GTP hydrolysis stage on the ribosome. This is Elongation factor Ts from Ralstonia pickettii (strain 12J).